Here is a 271-residue protein sequence, read N- to C-terminus: 4,5-DOPA dioxygenase extradiol (271 aa).

Positions 22, 57, 177, and 234 each coordinate Zn(2+).

This sequence belongs to the DODA-type extradiol aromatic ring-opening dioxygenase family. As to quaternary structure, monomer. Zn(2+) serves as cofactor.

The protein localises to the cytoplasm. The enzyme catalyses L-dopa + O2 = 4-(L-alanin-3-yl)-2-hydroxy-cis,cis-muconate 6-semialdehyde + H(+). In terms of biological role, in vitro, opens the cyclic ring of dihydroxy-phenylalanine (DOPA) between carbons 4 and 5, thus producing an unstable seco-DOPA that rearranges nonenzymatically to betalamic acid. The physiological substrate is unknown. This Escherichia coli (strain K12) protein is 4,5-DOPA dioxygenase extradiol (ygiD).